Reading from the N-terminus, the 211-residue chain is High mobility group protein B1-like 1 (211 aa).

An N6-acetyllysine mark is found at Lys-3, Lys-7, Lys-8, Lys-12, Lys-28, Lys-29, and Lys-30. Residues 9–79 (PRGKMSSYAF…HYERQMKTYI (71 aa)) constitute a DNA-binding region (HMG box 1). The disordered stretch occupies residues 71 to 96 (YERQMKTYIPPKGETKKKFKDPNAPK). Positions 83–94 (GETKKKFKDPNA) are enriched in basic and acidic residues. A DNA-binding region (HMG box 2) is located at residues 95 to 163 (PKRPPSAFFL…KYEKDIAAYQ (69 aa)). Residues Lys-127, Lys-128, Lys-172, Lys-173, Lys-177, Lys-180, Lys-182, Lys-183, Lys-184, and Lys-185 each carry the N6-acetyllysine modification. The disordered stretch occupies residues 161–211 (AYQAKGKPEAAKKGVVKAEKSKKKKEEEEDEEDEEDEEEEDEEDEEDDDDE). Residues 166-179 (GKPEAAKKGVVKAE) show a composition bias toward basic and acidic residues. Residues 187-211 (EEEDEEDEEDEEEEDEEDEEDDDDE) show a composition bias toward acidic residues.

It belongs to the HMGB family.

The protein localises to the nucleus. Its subcellular location is the chromosome. Binds preferentially single-stranded DNA and unwinds double-stranded DNA. The sequence is that of High mobility group protein B1-like 1 (HMGB1P1) from Homo sapiens (Human).